The chain runs to 114 residues: uncharacterized protein (114 aa).

3 consecutive transmembrane segments (helical) span residues 38-60 (PLWFLTVTGILEIAGALAMTAGI), 64-86 (YAAIGAGVLFVVLMAGAIHAHMF), and 91-113 (SVIMAIQAMICLIVSIMIIMGSY).

It is found in the cell membrane. This is an uncharacterized protein from Bacillus subtilis (strain 168).